Consider the following 156-residue polypeptide: Endogenous retrovirus group K member 7 Pro protein (156 aa).

Positions 21–96 constitute a Peptidase A2 domain; that stretch reads FEGLVDTGAD…IPLNLWGRDL (76 aa). Aspartate 26 is an active-site residue. Residues 111–156 form the G-patch domain; that stretch reads YSPTSQKIMTKMGYIPGKGLGKNEDGIKVPVEAKINQEREGIGYPF.

This sequence belongs to the peptidase A2 family. HERV class-II K(HML-2) subfamily. As to quaternary structure, active as a homodimer. Autoproteolytically processed at the N-terminus. Expected C-terminal autoprocessing not detected. The sequence shown is that of the processed Pro protein.

It catalyses the reaction Processing at the authentic HIV-1 PR recognition site and release of the mature p17 matrix and the p24 capsid protein, as a result of the cleavage of the -SQNY-|-PIVQ- cleavage site.. Functionally, retroviral proteases have roles in processing of the primary translation products and the maturation of the viral particle. Endogenous Pro proteins may have kept, lost or modified their original function during evolution. This endogenous protein has retained most of the characteristics of retroviral proteases. This chain is Endogenous retrovirus group K member 7 Pro protein (ERVK-7), found in Homo sapiens (Human).